Reading from the N-terminus, the 207-residue chain is Large ribosomal subunit protein uL4 (207 aa).

The interval 48–89 is disordered; it reads THKVKNRSEVSGGGRKPWRQKGTGRARQGSIRSPQWRGGGTV.

This sequence belongs to the universal ribosomal protein uL4 family. In terms of assembly, part of the 50S ribosomal subunit.

Functionally, one of the primary rRNA binding proteins, this protein initially binds near the 5'-end of the 23S rRNA. It is important during the early stages of 50S assembly. It makes multiple contacts with different domains of the 23S rRNA in the assembled 50S subunit and ribosome. In terms of biological role, forms part of the polypeptide exit tunnel. The protein is Large ribosomal subunit protein uL4 of Bacillus cytotoxicus (strain DSM 22905 / CIP 110041 / 391-98 / NVH 391-98).